A 107-amino-acid chain; its full sequence is Nucleoid-associated protein Xfasm12_1216 (107 aa).

Belongs to the YbaB/EbfC family. Homodimer.

It is found in the cytoplasm. The protein localises to the nucleoid. Its function is as follows. Binds to DNA and alters its conformation. May be involved in regulation of gene expression, nucleoid organization and DNA protection. This is Nucleoid-associated protein Xfasm12_1216 from Xylella fastidiosa (strain M12).